The chain runs to 373 residues: Pulmonary surfactant-associated protein B (373 aa).

The signal sequence occupies residues 1–22 (MAKSHLLPWLLLLPILCGPGTA). Residues 23–187 (AAITYSLACA…PQTQDLSEQL (165 aa)) constitute a propeptide that is removed on maturation. The Saposin A-type domain occupies 24 to 64 (AITYSLACAQGPEFWCQSLEQALQCRALGHCLQEVWGHVEA). Saposin B-type domains lie at 64–146 (ADDL…KPRH), 191–268 (PIPY…SSED), and 287–362 (QDSD…AAPF). 9 disulfide bridges follow: C68–C142, C71–C136, C99–C111, C195–C264, C198–C258, C222–C233, C291–C358, C294–C352, and C317–C327. N73 is a glycosylation site (N-linked (GlcNAc...) asparagine). Residues 267 to 373 (EDSAGPALPA…PLQCVHSPHF (107 aa)) constitute a propeptide that is removed on maturation. N303 is a glycosylation site (N-linked (GlcNAc...) asparagine).

In terms of assembly, homodimer; disulfide-linked.

Its subcellular location is the secreted. It is found in the extracellular space. It localises to the surface film. Its function is as follows. Pulmonary surfactant-associated proteins promote alveolar stability by lowering the surface tension at the air-liquid interface in the peripheral air spaces. SP-B increases the collapse pressure of palmitic acid to nearly 70 millinewtons per meter. The chain is Pulmonary surfactant-associated protein B (SFTPB) from Bos taurus (Bovine).